Consider the following 188-residue polypeptide: ATP-dependent protease subunit HslV (188 aa).

Threonine 8 is an active-site residue. Residues alanine 165, cysteine 168, and threonine 171 each contribute to the Na(+) site.

Belongs to the peptidase T1B family. HslV subfamily. In terms of assembly, a double ring-shaped homohexamer of HslV is capped on each side by a ring-shaped HslU homohexamer. The assembly of the HslU/HslV complex is dependent on binding of ATP.

The protein localises to the cytoplasm. It catalyses the reaction ATP-dependent cleavage of peptide bonds with broad specificity.. With respect to regulation, allosterically activated by HslU binding. Protease subunit of a proteasome-like degradation complex believed to be a general protein degrading machinery. The polypeptide is ATP-dependent protease subunit HslV (Neorickettsia sennetsu (strain ATCC VR-367 / Miyayama) (Ehrlichia sennetsu)).